Reading from the N-terminus, the 1220-residue chain is Diacylglycerol kinase delta (1220 aa).

The segment at 1 to 47 is disordered; that stretch reads MAAAAGAPPPGPPQPPPPPPPEESSDSEPEAEPGSPQKLIRKVSTSG. The regulates association with membranes stretch occupies residues 1–52; the sequence is MAAAAGAPPPGPPQPPPPPPPEESSDSEPEAEPGSPQKLIRKVSTSGQIRQK. Residues 7–22 show a composition bias toward pro residues; that stretch reads APPPGPPQPPPPPPPE. In terms of domain architecture, PH spans 53–146; the sequence is TILKEGMLTK…WIAALKTVQN (94 aa). 2 Phorbol-ester/DAG-type zinc fingers span residues 163-213 and 235-286; these read MHNW…TSNC and PHQW…VMKC. The DAGKc domain maps to 317–451; that stretch reads SCTSPLLVFV…MLDRWSVMAY (135 aa). Positions 554 to 584 are disordered; sequence DDESQASSSLSNPPPTIAEEAEDGDGSGNIC. An SAM domain is found at 1151-1214; the sequence is WGTEEVAAWL…LCGIKELSRS (64 aa).

The protein belongs to the eukaryotic diacylglycerol kinase family. As to quaternary structure, homooligomer. Monomer. Interacts with AP2A2; regulates clathrin-dependent endocytosis. Widely expressed.

The protein localises to the cell membrane. Its subcellular location is the membrane. It localises to the clathrin-coated pit. The protein resides in the cytoplasm. It catalyses the reaction a 1,2-diacyl-sn-glycerol + ATP = a 1,2-diacyl-sn-glycero-3-phosphate + ADP + H(+). The catalysed reaction is 1,2-di-(9Z-octadecenoyl)-sn-glycerol + ATP = 1,2-di-(9Z-octadecenoyl)-sn-glycero-3-phosphate + ADP + H(+). It carries out the reaction 1-octadecanoyl-2-(5Z,8Z,11Z,14Z-eicosatetraenoyl)-sn-glycerol + ATP = 1-octadecanoyl-2-(5Z,8Z,11Z,14Z-eicosatetraenoyl)-sn-glycero-3-phosphate + ADP + H(+). The protein operates within lipid metabolism; glycerolipid metabolism. Diacylglycerol kinase that converts diacylglycerol/DAG into phosphatidic acid/phosphatidate/PA and regulates the respective levels of these two bioactive lipids. Thereby, acts as a central switch between the signaling pathways activated by these second messengers with different cellular targets and opposite effects in numerous biological processes. By controlling the levels of diacylglycerol, regulates for instance the PKC and EGF receptor signaling pathways and plays a crucial role during development. May also regulate clathrin-dependent endocytosis. This is Diacylglycerol kinase delta from Mus musculus (Mouse).